Consider the following 78-residue polypeptide: Conotoxin Bu2 (78 aa).

The first 19 residues, 1 to 19 (MKLTCVLIIAVLFLTAITA), serve as a signal peptide directing secretion. Residues 20 to 41 (DDSRDKQVYRAVGLIDKMRRIR) constitute a propeptide that is removed on maturation. 3 disulfide bridges follow: Cys46–Cys59, Cys53–Cys64, and Cys58–Cys73.

Belongs to the conotoxin O1 superfamily. In terms of tissue distribution, expressed by the venom duct.

The protein localises to the secreted. The polypeptide is Conotoxin Bu2 (Conus bullatus (Bubble cone)).